Consider the following 336-residue polypeptide: Protein-lysine N-methyltransferase EFM3 (336 aa).

S-adenosyl-L-methionine is bound by residues Trp-147, 173–175 (GTG), Asp-196, Leu-232, and Ala-251.

Belongs to the class I-like SAM-binding methyltransferase superfamily. EEF2KMT family.

The protein localises to the cytoplasm. In terms of biological role, S-adenosyl-L-methionine-dependent protein-lysine N-methyltransferase that methylates elongation factor 2. This is Protein-lysine N-methyltransferase EFM3 from Chaetomium thermophilum (strain DSM 1495 / CBS 144.50 / IMI 039719) (Thermochaetoides thermophila).